A 110-amino-acid chain; its full sequence is Large ribosomal subunit protein uL22 (110 aa).

It belongs to the universal ribosomal protein uL22 family. As to quaternary structure, part of the 50S ribosomal subunit.

Its function is as follows. This protein binds specifically to 23S rRNA; its binding is stimulated by other ribosomal proteins, e.g. L4, L17, and L20. It is important during the early stages of 50S assembly. It makes multiple contacts with different domains of the 23S rRNA in the assembled 50S subunit and ribosome. The globular domain of the protein is located near the polypeptide exit tunnel on the outside of the subunit, while an extended beta-hairpin is found that lines the wall of the exit tunnel in the center of the 70S ribosome. The chain is Large ribosomal subunit protein uL22 from Aggregatibacter actinomycetemcomitans (Actinobacillus actinomycetemcomitans).